Consider the following 364-residue polypeptide: MGILEKIKDIEAEMSRTQKNKATEYHLGLLKAKLARLRQQLLDPPKSSGKGGDGFEVLKSGDARVALIGFPSVGKSTILTKLTETKSLAAAYEFTTLTCIPGVIQHKGARIQLLDTPGIIEGASQGRGRGRQVIAVARTADLILMMLDANKGEIQKRLLQEELESIGIRLNSQPPNIYFKLKSAGGVNLTATQTLTKITEKLAKSILHEYKIFNCDLVIRCDPTVDELIDAIEGRRSYIRCLYVYNKMDHMSMEDVDRLSRQPNSVVISCNMNLNLDFLLDKIWDYLNLVRVYTKLRGASPDFNDAIILREGATMEDICRFLHKELVSQFKYGIVWGVSAKHCPQRVGISHALEDEDVIQIVKK.

The region spanning 63 to 288 (ARVALIGFPS…LLDKIWDYLN (226 aa)) is the OBG-type G domain. Residues 69-76 (GFPSVGKS), 115-119 (DTPGI), and 246-249 (NKMD) contribute to the GTP site. A TGS domain is found at 288-363 (NLVRVYTKLR…EDEDVIQIVK (76 aa)).

Belongs to the TRAFAC class OBG-HflX-like GTPase superfamily. OBG GTPase family.

The polypeptide is Developmentally-regulated GTP-binding protein 2 homolog (drg2) (Dictyostelium discoideum (Social amoeba)).